A 184-amino-acid chain; its full sequence is GTP cyclohydrolase 1 (184 aa).

Zn(2+) is bound by residues Cys-75, His-78, and Cys-146.

This sequence belongs to the GTP cyclohydrolase I family. In terms of assembly, toroid-shaped homodecamer, composed of two pentamers of five dimers.

It catalyses the reaction GTP + H2O = 7,8-dihydroneopterin 3'-triphosphate + formate + H(+). It participates in cofactor biosynthesis; 7,8-dihydroneopterin triphosphate biosynthesis; 7,8-dihydroneopterin triphosphate from GTP: step 1/1. This Pseudoalteromonas atlantica (strain T6c / ATCC BAA-1087) protein is GTP cyclohydrolase 1.